The primary structure comprises 571 residues: Sulfite reductase [NADPH] hemoprotein beta-component (571 aa).

[4Fe-4S] cluster-binding residues include cysteine 436, cysteine 442, cysteine 481, and cysteine 485. Siroheme is bound at residue cysteine 485.

The protein belongs to the nitrite and sulfite reductase 4Fe-4S domain family. Alpha(8)-beta(8). The alpha component is a flavoprotein, the beta component is a hemoprotein. Requires siroheme as cofactor. The cofactor is [4Fe-4S] cluster.

It carries out the reaction hydrogen sulfide + 3 NADP(+) + 3 H2O = sulfite + 3 NADPH + 4 H(+). It participates in sulfur metabolism; hydrogen sulfide biosynthesis; hydrogen sulfide from sulfite (NADPH route): step 1/1. In terms of biological role, component of the sulfite reductase complex that catalyzes the 6-electron reduction of sulfite to sulfide. This is one of several activities required for the biosynthesis of L-cysteine from sulfate. The chain is Sulfite reductase [NADPH] hemoprotein beta-component from Anoxybacillus flavithermus (strain DSM 21510 / WK1).